The chain runs to 80 residues: Putative membrane protein insertion efficiency factor (80 aa).

This sequence belongs to the UPF0161 family.

Its subcellular location is the cell membrane. Could be involved in insertion of integral membrane proteins into the membrane. This chain is Putative membrane protein insertion efficiency factor, found in Shouchella clausii (strain KSM-K16) (Alkalihalobacillus clausii).